Reading from the N-terminus, the 127-residue chain is MORF4 family-associated protein 1-like 1 (127 aa).

The stretch at 87-118 forms a coiled coil; that stretch reads GEADERVSELCEKAEEKAKEIAKMAEMLVELV.

The protein belongs to the MORF4 family-associated protein family.

This chain is MORF4 family-associated protein 1-like 1 (MRFAP1L1), found in Homo sapiens (Human).